Here is a 233-residue protein sequence, read N- to C-terminus: tRNA (guanine-N(7)-)-methyltransferase (233 aa).

The tract at residues M1–P22 is disordered. 4 residues coordinate S-adenosyl-L-methionine: E64, E89, D116, and D138. D138 is a catalytic residue. Substrate is bound by residues K142, D174, and T212–E215.

Belongs to the class I-like SAM-binding methyltransferase superfamily. TrmB family.

The enzyme catalyses guanosine(46) in tRNA + S-adenosyl-L-methionine = N(7)-methylguanosine(46) in tRNA + S-adenosyl-L-homocysteine. Its pathway is tRNA modification; N(7)-methylguanine-tRNA biosynthesis. In terms of biological role, catalyzes the formation of N(7)-methylguanine at position 46 (m7G46) in tRNA. This is tRNA (guanine-N(7)-)-methyltransferase from Brucella melitensis biotype 1 (strain ATCC 23456 / CCUG 17765 / NCTC 10094 / 16M).